We begin with the raw amino-acid sequence, 713 residues long: Cyclomaltodextrin glucanotransferase (713 aa).

Residues 1 to 27 (MKRFMKLTAVWTLWLSLTLGLLSPVHA) form the signal peptide. The A1 stretch occupies residues 28-165 (APDTSVSNKQ…NIKVIIDFAP (138 aa)). Ca(2+)-binding residues include aspartate 54, asparagine 56, asparagine 59, and asparagine 60. Cysteine 70 and cysteine 77 are oxidised to a cystine. Residues glycine 78 and aspartate 80 each contribute to the Ca(2+) site. 127–128 (YW) contacts substrate. Asparagine 166 serves as a coordination point for Ca(2+). The segment at 166 to 229 (NHTSPASSDD…NLYDLADLNH (64 aa)) is b. Histidine 167 is a binding site for substrate. Isoleucine 217 serves as a coordination point for Ca(2+). 220–223 (NLYD) provides a ligand contact to substrate. Aspartate 226 lines the Ca(2+) pocket. An A2 region spans residues 230–433 (NNSSVDVYLK…LRKSNPAIAY (204 aa)). Substrate is bound at residue arginine 254. Residue aspartate 256 is the Nucleophile of the active site. Substrate is bound at residue 259–260 (KH). Histidine 260 lines the Ca(2+) pocket. Residue glutamate 284 is the Proton donor of the active site. Residues histidine 354, aspartate 398, and arginine 402 each coordinate substrate. Residues 434-522 (GSTHERWINN…GTAVWQYTTD (89 aa)) are c. The segment at 523-609 (ATTPIIGNVG…SNIYDNFEVL (87 aa)) is d. Residues 526 to 607 (PIIGNVGPMM…AASNIYDNFE (82 aa)) enclose the IPT/TIG domain. The region spanning 608–713 (VLTGDQVTVR…TATVNVNWQP (106 aa)) is the CBM20 domain. Residues 610-713 (TGDQVTVRFV…TATVNVNWQP (104 aa)) form an e region.

This sequence belongs to the glycosyl hydrolase 13 family. As to quaternary structure, monomer. It depends on Ca(2+) as a cofactor.

Its subcellular location is the secreted. It catalyses the reaction Cyclizes part of a (1-&gt;4)-alpha-D-glucan chain by formation of a (1-&gt;4)-alpha-D-glucosidic bond.. The polypeptide is Cyclomaltodextrin glucanotransferase (cgt) (Bacillus sp. (strain 1011)).